The chain runs to 396 residues: Cathepsin D (396 aa).

The N-terminal stretch at 1–18 (MKMLLLCVFSALALTNDA) is a signal peptide. Residues 19–61 (LVRIPLKKFRSIRRQLTDSGKRAEELLADHHSLKYNLSFPASN) constitute a propeptide, activation peptide. Positions 76-393 (YYGEIGLGTP…DRDANRVGFA (318 aa)) constitute a Peptidase A1 domain. Asp94 is a catalytic residue. Cys107 and Cys114 form a disulfide bridge. Residues Asn131 and Asn249 are each glycosylated (N-linked (GlcNAc...) asparagine). Residues Cys272 and Cys276 are joined by a disulfide bond. Residue Asp281 is part of the active site. Cysteines 315 and 352 form a disulfide.

The protein belongs to the peptidase A1 family. Monomer.

The protein resides in the lysosome. The enzyme catalyses Specificity similar to, but narrower than, that of pepsin A. Does not cleave the 4-Gln-|-His-5 bond in B chain of insulin.. Its activity is regulated as follows. Inhibited by pepstatin. Functionally, acid protease active in intracellular protein breakdown. This chain is Cathepsin D (ctsd), found in Chionodraco hamatus (Antarctic teleost icefish).